Here is a 453-residue protein sequence, read N- to C-terminus: Acyl-coenzyme A thioesterase 2, mitochondrial (453 aa).

A mitochondrion-targeting transit peptide spans 1 to 42 (MVASSFAVLRASRLCQWGWKSWTQLSGPPPLSTGGRTTFART). Residue Lys-83 is modified to N6-acetyllysine. Residues Ser-273, Asp-365, and His-399 each act as charge relay system in the active site. The residue at position 447 (Lys-447) is an N6-succinyllysine.

It belongs to the C/M/P thioester hydrolase family. Monomer. The N-terminus is blocked. In terms of tissue distribution, constitutively expressed in heart and brown fat. Strongly induced in liver, and weakly in kidney, in peroxisome proliferator treated rat.

The protein localises to the mitochondrion matrix. The enzyme catalyses hexadecanoyl-CoA + H2O = hexadecanoate + CoA + H(+). It carries out the reaction tetradecanoyl-CoA + H2O = tetradecanoate + CoA + H(+). It catalyses the reaction octadecanoyl-CoA + H2O = octadecanoate + CoA + H(+). The catalysed reaction is eicosanoyl-CoA + H2O = eicosanoate + CoA + H(+). The enzyme catalyses decanoyl-CoA + H2O = decanoate + CoA + H(+). It carries out the reaction dodecanoyl-CoA + H2O = dodecanoate + CoA + H(+). It catalyses the reaction (9Z)-octadecenoyl-CoA + H2O = (9Z)-octadecenoate + CoA + H(+). The catalysed reaction is (9Z)-hexadecenoyl-CoA + H2O = (9Z)-hexadecenoate + CoA + H(+). The enzyme catalyses (9E)-octadecenoyl-CoA + H2O = (9E)-octadecenoate + CoA + H(+). It carries out the reaction (9Z,12Z)-octadecadienoyl-CoA + H2O = (9Z,12Z)-octadecadienoate + CoA + H(+). The protein operates within lipid metabolism; fatty acid metabolism. Its function is as follows. Catalyzes the hydrolysis of acyl-CoAs into free fatty acids and coenzyme A (CoASH), regulating their respective intracellular levels. Displays higher activity toward long chain acyl CoAs (C14-C20). The enzyme is involved in enhancing the hepatic fatty acid oxidation in mitochondria. The chain is Acyl-coenzyme A thioesterase 2, mitochondrial (Acot2) from Rattus norvegicus (Rat).